Consider the following 356-residue polypeptide: Chorismate synthase (356 aa).

R44 contacts NADP(+). FMN-binding positions include 121 to 123 (HFS), G278, 293 to 297 (KPTPS), and R320.

It belongs to the chorismate synthase family. The cofactor is FMNH2.

The enzyme catalyses 5-O-(1-carboxyvinyl)-3-phosphoshikimate = chorismate + phosphate. The protein operates within metabolic intermediate biosynthesis; chorismate biosynthesis; chorismate from D-erythrose 4-phosphate and phosphoenolpyruvate: step 7/7. Catalyzes the anti-1,4-elimination of the C-3 phosphate and the C-6 proR hydrogen from 5-enolpyruvylshikimate-3-phosphate (EPSP) to yield chorismate, which is the branch point compound that serves as the starting substrate for the three terminal pathways of aromatic amino acid biosynthesis. This reaction introduces a second double bond into the aromatic ring system. The chain is Chorismate synthase from Pyrococcus abyssi (strain GE5 / Orsay).